Consider the following 493-residue polypeptide: Argininosuccinate lyase (493 aa).

This sequence belongs to the lyase 1 family. Argininosuccinate lyase subfamily.

Its subcellular location is the cytoplasm. It carries out the reaction 2-(N(omega)-L-arginino)succinate = fumarate + L-arginine. It functions in the pathway amino-acid biosynthesis; L-arginine biosynthesis; L-arginine from L-ornithine and carbamoyl phosphate: step 3/3. This Methanospirillum hungatei JF-1 (strain ATCC 27890 / DSM 864 / NBRC 100397 / JF-1) protein is Argininosuccinate lyase.